The sequence spans 55 residues: Probable Rubredoxin-2 (55 aa).

The 51-residue stretch at 4–54 (MARYQCMCGWVYDEDKGEPSQNIPPGTKFEDLPDTFRCPQCGLGKNAFRKI) folds into the Rubredoxin-like domain. Fe cation contacts are provided by C9, C11, C41, and C44.

Belongs to the rubredoxin family. Requires Fe(3+) as cofactor.

Functionally, rubredoxin is a small nonheme, iron protein lacking acid-labile sulfide. Its single Fe, chelated to 4 Cys, functions as an electron acceptor and may also stabilize the conformation of the molecule. The chain is Probable Rubredoxin-2 from Methanocaldococcus jannaschii (strain ATCC 43067 / DSM 2661 / JAL-1 / JCM 10045 / NBRC 100440) (Methanococcus jannaschii).